The chain runs to 20 residues: Venom prothrombin activator notanarin-D (20 aa).

Residues 1 to 10 form the Gla domain; sequence SNSLFEEVRP. 4-carboxyglutamate occurs at positions 6 and 7. Residues 11–20 form the Peptidase S1 domain; the sequence is IVNGMDCKLG.

Belongs to the peptidase S1 family. Snake venom subfamily. As to quaternary structure, heterodimer of a light chain and a heavy chain; disulfide-linked. Post-translationally, gamma-carboxyglutamate residues are formed by vitamin K dependent carboxylation. These residues are essential for the binding of calcium. As to expression, expressed by the venom gland.

The protein localises to the secreted. The catalysed reaction is Selective cleavage of Arg-|-Thr and then Arg-|-Ile bonds in prothrombin to form thrombin.. Its function is as follows. Snake prothrombin activator that attacks the hemostatic system of prey. This protein is functionally similar to blood coagulation factor Xa. This Notechis scutatus niger (Peninsula tiger snake) protein is Venom prothrombin activator notanarin-D.